A 273-amino-acid chain; its full sequence is 4-hydroxy-3-methylbut-2-enyl diphosphate reductase (273 aa).

Cys12 contributes to the [4Fe-4S] cluster binding site. Positions 36 and 70 each coordinate (2E)-4-hydroxy-3-methylbut-2-enyl diphosphate. Positions 36 and 70 each coordinate dimethylallyl diphosphate. Residues His36 and His70 each contribute to the isopentenyl diphosphate site. Cys92 is a binding site for [4Fe-4S] cluster. Residue His120 coordinates (2E)-4-hydroxy-3-methylbut-2-enyl diphosphate. His120 provides a ligand contact to dimethylallyl diphosphate. His120 contributes to the isopentenyl diphosphate binding site. Glu122 serves as the catalytic Proton donor. Thr157 contacts (2E)-4-hydroxy-3-methylbut-2-enyl diphosphate. Cys185 is a binding site for [4Fe-4S] cluster. Residues Ser213, Ser214, Asn215, and Ser257 each contribute to the (2E)-4-hydroxy-3-methylbut-2-enyl diphosphate site. Ser213, Ser214, Asn215, and Ser257 together coordinate dimethylallyl diphosphate. Positions 213, 214, 215, and 257 each coordinate isopentenyl diphosphate.

This sequence belongs to the IspH family. Requires [4Fe-4S] cluster as cofactor.

The catalysed reaction is isopentenyl diphosphate + 2 oxidized [2Fe-2S]-[ferredoxin] + H2O = (2E)-4-hydroxy-3-methylbut-2-enyl diphosphate + 2 reduced [2Fe-2S]-[ferredoxin] + 2 H(+). It carries out the reaction dimethylallyl diphosphate + 2 oxidized [2Fe-2S]-[ferredoxin] + H2O = (2E)-4-hydroxy-3-methylbut-2-enyl diphosphate + 2 reduced [2Fe-2S]-[ferredoxin] + 2 H(+). It participates in isoprenoid biosynthesis; dimethylallyl diphosphate biosynthesis; dimethylallyl diphosphate from (2E)-4-hydroxy-3-methylbutenyl diphosphate: step 1/1. It functions in the pathway isoprenoid biosynthesis; isopentenyl diphosphate biosynthesis via DXP pathway; isopentenyl diphosphate from 1-deoxy-D-xylulose 5-phosphate: step 6/6. In terms of biological role, catalyzes the conversion of 1-hydroxy-2-methyl-2-(E)-butenyl 4-diphosphate (HMBPP) into a mixture of isopentenyl diphosphate (IPP) and dimethylallyl diphosphate (DMAPP). Acts in the terminal step of the DOXP/MEP pathway for isoprenoid precursor biosynthesis. This chain is 4-hydroxy-3-methylbut-2-enyl diphosphate reductase, found in Helicobacter hepaticus (strain ATCC 51449 / 3B1).